The primary structure comprises 322 residues: Outer membrane protein assembly factor BamC (322 aa).

The signal sequence occupies residues 1-22 (MISLLAVAVLAGCSNPETRSQA).

Belongs to the BamC family. As to quaternary structure, part of the Bam complex.

Its subcellular location is the cell outer membrane. Its function is as follows. Part of the outer membrane protein assembly complex, which is involved in assembly and insertion of beta-barrel proteins into the outer membrane. The sequence is that of Outer membrane protein assembly factor BamC from Oceanimonas sp. (strain GK1 / IBRC-M 10197).